Here is a 478-residue protein sequence, read N- to C-terminus: Allene oxide synthase 2 (478 aa).

3 residues coordinate heme b: Lys88, His119, and Lys123. Asn278 is a binding site for (13S)-hydroperoxy-(9Z,11E,15Z)-octadecatrienoate. 2 residues coordinate heme b: Lys427 and Cys429.

The protein belongs to the cytochrome P450 family. Requires heme b as cofactor. In terms of tissue distribution, weakly expressed in roots, shoots, leaves and flowers.

It catalyses the reaction (13S)-hydroperoxy-(9Z,11E,15Z)-octadecatrienoate = (9Z,13S,15Z)-12,13-epoxyoctadeca-9,11,15-trienoate + H2O. It participates in lipid metabolism; oxylipin biosynthesis. Its function is as follows. Involved in the biosynthesis of jasmonic acid, a growth regulator that is implicated also as a signaling molecule in plant defense. Converts 13-hydroperoxylinolenic acid to 12,13-epoxylinolenic acid. The protein is Allene oxide synthase 2 (CYP74A2) of Oryza sativa subsp. japonica (Rice).